Here is a 694-residue protein sequence, read N- to C-terminus: Putative serine/threonine-protein kinase R679 (694 aa).

Residues 167-548 (ITKNKTVGKG…ITNILKHLFT (382 aa)) form the Protein kinase domain. ATP-binding positions include 173 to 181 (VGKGAAGIA) and Lys-196. Catalysis depends on Asp-395, which acts as the Proton acceptor.

It belongs to the protein kinase superfamily. Ser/Thr protein kinase family.

The protein localises to the virion. The enzyme catalyses L-seryl-[protein] + ATP = O-phospho-L-seryl-[protein] + ADP + H(+). The catalysed reaction is L-threonyl-[protein] + ATP = O-phospho-L-threonyl-[protein] + ADP + H(+). This chain is Putative serine/threonine-protein kinase R679, found in Acanthamoeba polyphaga (Amoeba).